We begin with the raw amino-acid sequence, 248 residues long: DNA repair protein RecO (248 aa).

Belongs to the RecO family.

Functionally, involved in DNA repair and RecF pathway recombination. The chain is DNA repair protein RecO from Chelativorans sp. (strain BNC1).